The chain runs to 415 residues: Homoserine O-acetyltransferase (415 aa).

The region spanning asparagine 47–proline 369 is the AB hydrolase-1 domain. The active-site Nucleophile is the serine 155. Arginine 226 serves as a coordination point for substrate. Catalysis depends on residues aspartate 329 and histidine 362. Aspartate 363 is a substrate binding site. Residues arginine 387–arginine 415 form a disordered region.

Belongs to the AB hydrolase superfamily. MetX family. As to quaternary structure, homodimer.

It localises to the cytoplasm. The enzyme catalyses L-homoserine + acetyl-CoA = O-acetyl-L-homoserine + CoA. It functions in the pathway amino-acid biosynthesis; L-methionine biosynthesis via de novo pathway; O-acetyl-L-homoserine from L-homoserine: step 1/1. In terms of biological role, transfers an acetyl group from acetyl-CoA to L-homoserine, forming acetyl-L-homoserine. The polypeptide is Homoserine O-acetyltransferase (Haloferax gibbonsii (strain ATCC 33959 / DSM 4427 / JCM 8863 / NBRC 102184 / NCIMB 2188 / Ma 2.38)).